The sequence spans 283 residues: Phosphatidylserine decarboxylase proenzyme (283 aa).

Active-site charge relay system; for autoendoproteolytic cleavage activity residues include aspartate 90, histidine 143, and serine 248. Residue serine 248 is the Schiff-base intermediate with substrate; via pyruvic acid; for decarboxylase activity of the active site. Serine 248 bears the Pyruvic acid (Ser); by autocatalysis mark.

Belongs to the phosphatidylserine decarboxylase family. PSD-B subfamily. Prokaryotic type I sub-subfamily. Heterodimer of a large membrane-associated beta subunit and a small pyruvoyl-containing alpha subunit. Pyruvate serves as cofactor. Post-translationally, is synthesized initially as an inactive proenzyme. Formation of the active enzyme involves a self-maturation process in which the active site pyruvoyl group is generated from an internal serine residue via an autocatalytic post-translational modification. Two non-identical subunits are generated from the proenzyme in this reaction, and the pyruvate is formed at the N-terminus of the alpha chain, which is derived from the carboxyl end of the proenzyme. The autoendoproteolytic cleavage occurs by a canonical serine protease mechanism, in which the side chain hydroxyl group of the serine supplies its oxygen atom to form the C-terminus of the beta chain, while the remainder of the serine residue undergoes an oxidative deamination to produce ammonia and the pyruvoyl prosthetic group on the alpha chain. During this reaction, the Ser that is part of the protease active site of the proenzyme becomes the pyruvoyl prosthetic group, which constitutes an essential element of the active site of the mature decarboxylase.

It is found in the cell membrane. The enzyme catalyses a 1,2-diacyl-sn-glycero-3-phospho-L-serine + H(+) = a 1,2-diacyl-sn-glycero-3-phosphoethanolamine + CO2. The protein operates within phospholipid metabolism; phosphatidylethanolamine biosynthesis; phosphatidylethanolamine from CDP-diacylglycerol: step 2/2. Functionally, catalyzes the formation of phosphatidylethanolamine (PtdEtn) from phosphatidylserine (PtdSer). The protein is Phosphatidylserine decarboxylase proenzyme of Francisella tularensis subsp. novicida (strain U112).